Here is a 211-residue protein sequence, read N- to C-terminus: Redox-sensing transcriptional repressor Rex (211 aa).

The H-T-H motif DNA-binding region spans 17-56 (LYYRFVSILKGKGIDRVNSKTISEALQIDSATIRRDFSYF). Position 91 to 96 (91 to 96 (GIGNLG)) interacts with NAD(+).

It belongs to the transcriptional regulatory Rex family. Homodimer.

It is found in the cytoplasm. Functionally, modulates transcription in response to changes in cellular NADH/NAD(+) redox state. The sequence is that of Redox-sensing transcriptional repressor Rex from Staphylococcus epidermidis (strain ATCC 35984 / DSM 28319 / BCRC 17069 / CCUG 31568 / BM 3577 / RP62A).